Consider the following 118-residue polypeptide: Large ribosomal subunit protein bL19 (118 aa).

Belongs to the bacterial ribosomal protein bL19 family.

This protein is located at the 30S-50S ribosomal subunit interface and may play a role in the structure and function of the aminoacyl-tRNA binding site. The polypeptide is Large ribosomal subunit protein bL19 (Metamycoplasma arthritidis (strain 158L3-1) (Mycoplasma arthritidis)).